The primary structure comprises 541 residues: Light-independent protochlorophyllide reductase subunit B (541 aa).

[4Fe-4S] cluster is bound at residue aspartate 36. Aspartate 290 functions as the Proton donor in the catalytic mechanism. 425-426 (GL) contacts substrate.

This sequence belongs to the ChlB/BchB/BchZ family. As to quaternary structure, protochlorophyllide reductase is composed of three subunits; ChlL, ChlN and ChlB. Forms a heterotetramer of two ChlB and two ChlN subunits. [4Fe-4S] cluster is required as a cofactor.

The enzyme catalyses chlorophyllide a + oxidized 2[4Fe-4S]-[ferredoxin] + 2 ADP + 2 phosphate = protochlorophyllide a + reduced 2[4Fe-4S]-[ferredoxin] + 2 ATP + 2 H2O. The protein operates within porphyrin-containing compound metabolism; chlorophyll biosynthesis (light-independent). In terms of biological role, component of the dark-operative protochlorophyllide reductase (DPOR) that uses Mg-ATP and reduced ferredoxin to reduce ring D of protochlorophyllide (Pchlide) to form chlorophyllide a (Chlide). This reaction is light-independent. The NB-protein (ChlN-ChlB) is the catalytic component of the complex. This is Light-independent protochlorophyllide reductase subunit B from Synechococcus sp. (strain CC9902).